Reading from the N-terminus, the 497-residue chain is Probable malate:quinone oxidoreductase (497 aa).

It belongs to the MQO family. It depends on FAD as a cofactor.

It carries out the reaction (S)-malate + a quinone = a quinol + oxaloacetate. Its pathway is carbohydrate metabolism; tricarboxylic acid cycle; oxaloacetate from (S)-malate (quinone route): step 1/1. This Rhodopseudomonas palustris (strain TIE-1) protein is Probable malate:quinone oxidoreductase.